The chain runs to 169 residues: Eukaryotic translation initiation factor 5A-2 (169 aa).

At Lys-64 the chain carries Hypusine.

The protein belongs to the eIF-5A family. Lys-51 undergoes hypusination, a unique post-translational modification that consists in the addition of a butylamino group from spermidine to lysine side chain, leading to the formation of the unusual amino acid hypusine. eIF-5As are the only known proteins to undergo this modification, which is essential for their function.

The protein localises to the cytoplasm. It localises to the nucleus. Functionally, translation factor that promotes translation elongation and termination, particularly upon ribosome stalling at specific amino acid sequence contexts. Binds between the exit (E) and peptidyl (P) site of the ribosome and promotes rescue of stalled ribosome: specifically required for efficient translation of polyproline-containing peptides as well as other motifs that stall the ribosome. Acts as a ribosome quality control (RQC) cofactor by joining the RQC complex to facilitate peptidyl transfer during CAT tailing step. The protein is Eukaryotic translation initiation factor 5A-2 (tif51b) of Schizosaccharomyces pombe (strain 972 / ATCC 24843) (Fission yeast).